A 134-amino-acid polypeptide reads, in one-letter code: uncharacterized protein (134 aa).

This is an uncharacterized protein from Methanocaldococcus jannaschii (strain ATCC 43067 / DSM 2661 / JAL-1 / JCM 10045 / NBRC 100440) (Methanococcus jannaschii).